We begin with the raw amino-acid sequence, 479 residues long: tRNA modification GTPase MnmE (479 aa).

Arg30, Glu91, and Lys130 together coordinate (6S)-5-formyl-5,6,7,8-tetrahydrofolate. The TrmE-type G domain occupies 226-402; sequence GFRIVLTGLP…VLKDLVKEFA (177 aa). A K(+)-binding site is contributed by Asn236. Residues 236 to 241, 255 to 261, and 280 to 283 each bind GTP; these read NVGKSS, TDIPGTT, and DTAG. Ser240 is a Mg(2+) binding site. Residues Thr255, Ile257, and Thr260 each coordinate K(+). Residue Thr261 coordinates Mg(2+). Residue Lys479 coordinates (6S)-5-formyl-5,6,7,8-tetrahydrofolate.

This sequence belongs to the TRAFAC class TrmE-Era-EngA-EngB-Septin-like GTPase superfamily. TrmE GTPase family. Homodimer. Heterotetramer of two MnmE and two MnmG subunits. Requires K(+) as cofactor.

The protein localises to the cytoplasm. Functionally, exhibits a very high intrinsic GTPase hydrolysis rate. Involved in the addition of a carboxymethylaminomethyl (cmnm) group at the wobble position (U34) of certain tRNAs, forming tRNA-cmnm(5)s(2)U34. The protein is tRNA modification GTPase MnmE of Bdellovibrio bacteriovorus (strain ATCC 15356 / DSM 50701 / NCIMB 9529 / HD100).